We begin with the raw amino-acid sequence, 572 residues long: EF-hand calcium-binding domain-containing protein 12 (572 aa).

2 disordered regions span residues 62-85 and 146-169; these read VPRKEDQTPLNPASQPQAPPKPIP and EQSAQPNASQATTRTTRKKAPRLS. The EF-hand domain occupies 196-231; the sequence is SRKIKILEIFHKVGQGENQRITREEFIAAVKAVGVP. Residue Glu-212 participates in Ca(2+) binding.

This is EF-hand calcium-binding domain-containing protein 12 (EFCAB12) from Homo sapiens (Human).